A 264-amino-acid chain; its full sequence is MIIPETDSFFFQEQPQHQPLYPDEALSPSLFGFDHYDHFYESFLPSQEIFLPSPKTRVFNESQELDSFHTPKHQKLIDSSFHFNSHDPFSPSPESNYLLDSYITEASNISKFQAPDFSSTFKVGWTEQGDTKKRELSAQSIAARKRRRRITEKTQELGKLIPGSQKHNTAEMFNAAAKYVKFLQAQIEILQLKQTKMQTLDSSKVGREMQFLLGSQEIQEKLSTEEVCVVPREMVQVLKAEECILTNPKISRDINKLLSTNLMN.

In terms of domain architecture, bHLH spans 134–183; sequence RELSAQSIAARKRRRRITEKTQELGKLIPGSQKHNTAEMFNAAAKYVKFL.

Homodimer. In terms of tissue distribution, expressed constitutively in roots, leaves, stems, and flowers.

The protein resides in the nucleus. The sequence is that of Transcription factor bHLH52 (BHLH52) from Arabidopsis thaliana (Mouse-ear cress).